Consider the following 1976-residue polypeptide: Protein TIC 214 (1976 aa).

6 consecutive transmembrane segments (helical) span residues 11–31 (LLLL…YYGF), 64–84 (FIMG…HLAL), 87–107 (PHTL…FFWN), 126–146 (LSIQ…HFVL), 173–193 (FFGW…VLSW), and 221–241 (IFSI…PSPI). Positions 619–635 (FEEEEEEEEEDDQEEST) are enriched in acidic residues. Disordered regions lie at residues 619-642 (FEEE…GIRS) and 830-861 (SSYV…EDKR). Residues 836-861 (GAKEKEKIEEEHEEEKGEYKRKEDKR) are compositionally biased toward basic and acidic residues. 2 consecutive transmembrane segments (helical) span residues 1054 to 1074 (IIKI…FFVL) and 1202 to 1222 (IYMS…QFFL). Basic and acidic residues predominate over residues 1633-1665 (QKERFHPKPKVESNQKGYLELENRNRDEKERQH). A disordered region spans residues 1633 to 1669 (QKERFHPKPKVESNQKGYLELENRNRDEKERQHQGNL).

This sequence belongs to the TIC214 family. Part of the Tic complex.

The protein localises to the plastid. It is found in the chloroplast inner membrane. In terms of biological role, involved in protein precursor import into chloroplasts. May be part of an intermediate translocation complex acting as a protein-conducting channel at the inner envelope. The protein is Protein TIC 214 of Nymphaea alba (White water-lily).